The chain runs to 256 residues: Low molecular mass lipoprotein PBMHP-6 (256 aa).

An N-terminal signal peptide occupies residues 1-19 (MRLTLFAFVLAVCALASNA).

This sequence belongs to the 30 kDa lipoprotein family.

It localises to the secreted. In Bombyx mori (Silk moth), this protein is Low molecular mass lipoprotein PBMHP-6.